A 377-amino-acid chain; its full sequence is Cytochrome b (377 aa).

4 consecutive transmembrane segments (helical) span residues 36–56 (WGSLLGIFLIIPIITGLFLAM), 80–102 (WLIRFIHVNGASFFFIFLYLHMA), 115–135 (VWLIGCTIYVVSMATAFMGYI), and 181–201 (FFVLHFILPFIILALSIIHLI). Heme b contacts are provided by His86 and His100. Heme b contacts are provided by His185 and His199. His204 lines the a ubiquinone pocket. 4 consecutive transmembrane segments (helical) span residues 227 to 247 (YSSKDLMFLLLLMMIMMVIIF), 291 to 311 (LGGVLTMVFSILILFLLPFIS), 326 to 346 (LFWSFVVNMLILTWIGGMPVV), and 354 to 374 (LTSTFLYFIIILIYSNSFLMI).

It belongs to the cytochrome b family. As to quaternary structure, the main subunits of complex b-c1 are: cytochrome b, cytochrome c1 and the Rieske protein. It depends on heme b as a cofactor.

The protein localises to the mitochondrion inner membrane. Component of the ubiquinol-cytochrome c reductase complex (complex III or cytochrome b-c1 complex) that is part of the mitochondrial respiratory chain. The b-c1 complex mediates electron transfer from ubiquinol to cytochrome c. Contributes to the generation of a proton gradient across the mitochondrial membrane that is then used for ATP synthesis. This is Cytochrome b (mt:Cyt-b) from Myzostoma seymourcollegiorum (Polychaete worm).